The primary structure comprises 600 residues: UvrABC system protein C (600 aa).

The 78-residue stretch at 15-92 folds into the GIY-YIG domain; the sequence is EKPGCYLMKD…IKKYQPYYNV (78 aa). Residues 197–232 form the UVR domain; it reads GAVKQDLTQKMEQASEQLEFERAAEIRDQLKYIEET.

This sequence belongs to the UvrC family. In terms of assembly, interacts with UvrB in an incision complex.

It localises to the cytoplasm. The UvrABC repair system catalyzes the recognition and processing of DNA lesions. UvrC both incises the 5' and 3' sides of the lesion. The N-terminal half is responsible for the 3' incision and the C-terminal half is responsible for the 5' incision. The chain is UvrABC system protein C from Lactobacillus helveticus (strain DPC 4571).